Here is a 443-residue protein sequence, read N- to C-terminus: Xaa-Pro dipeptidase (443 aa).

Residues Asp-246, Asp-257, His-339, Glu-384, and Glu-423 each contribute to the Mn(2+) site.

Belongs to the peptidase M24B family. Bacterial-type prolidase subfamily. Mn(2+) is required as a cofactor.

It carries out the reaction Xaa-L-Pro dipeptide + H2O = an L-alpha-amino acid + L-proline. In terms of biological role, splits dipeptides with a prolyl residue in the C-terminal position. This is Xaa-Pro dipeptidase from Shigella dysenteriae serotype 1 (strain Sd197).